A 523-amino-acid chain; its full sequence is Glutamate--cysteine ligase (523 aa).

This sequence belongs to the glutamate--cysteine ligase type 1 family. Type 1 subfamily.

The enzyme catalyses L-cysteine + L-glutamate + ATP = gamma-L-glutamyl-L-cysteine + ADP + phosphate + H(+). It functions in the pathway sulfur metabolism; glutathione biosynthesis; glutathione from L-cysteine and L-glutamate: step 1/2. In Shewanella oneidensis (strain ATCC 700550 / JCM 31522 / CIP 106686 / LMG 19005 / NCIMB 14063 / MR-1), this protein is Glutamate--cysteine ligase.